The following is a 170-amino-acid chain: Acetyl-CoA decarbonylase/synthase complex subunit epsilon 1 (170 aa).

This sequence belongs to the CdhB family. In terms of assembly, heterotetramer of two alpha and two epsilon subunits. The ACDS complex is made up of alpha, epsilon, beta, gamma and delta subunits with a probable stoichiometry of (alpha(2)epsilon(2))(4)-beta(8)-(gamma(1)delta(1))(8).

It participates in one-carbon metabolism; methanogenesis from acetate. Part of a complex that catalyzes the reversible cleavage of acetyl-CoA, allowing growth on acetate as sole source of carbon and energy. The alpha-epsilon subcomponent functions as a carbon monoxide dehydrogenase. The precise role of the epsilon subunit is unclear; it may have a stabilizing role within the alpha(2)epsilon(2) component and/or be involved in electron transfer to FAD during a potential FAD-mediated CO oxidation. The sequence is that of Acetyl-CoA decarbonylase/synthase complex subunit epsilon 1 from Methanosarcina barkeri (strain Fusaro / DSM 804).